Here is a 211-residue protein sequence, read N- to C-terminus: 3-demethoxyubiquinol 3-hydroxylase (211 aa).

Positions 60, 90, 93, 142, 174, and 177 each coordinate Fe cation.

The protein belongs to the COQ7 family. Requires Fe cation as cofactor.

The protein localises to the cell membrane. The catalysed reaction is a 5-methoxy-2-methyl-3-(all-trans-polyprenyl)benzene-1,4-diol + AH2 + O2 = a 3-demethylubiquinol + A + H2O. Its pathway is cofactor biosynthesis; ubiquinone biosynthesis. Its function is as follows. Catalyzes the hydroxylation of 2-nonaprenyl-3-methyl-6-methoxy-1,4-benzoquinol during ubiquinone biosynthesis. The protein is 3-demethoxyubiquinol 3-hydroxylase of Acinetobacter baylyi (strain ATCC 33305 / BD413 / ADP1).